Here is a 178-residue protein sequence, read N- to C-terminus: MAELTTLARPYAKAAFEHAQAHQQLANWSAMLGLAAAVSQDDTMQRLLKAPRLTSAEKAATFIDVCGDKFNAQAQNFIHVAAENDRLLLLPEIAALFDLYKAEQEKSVDVEVTSAFALNQEQQDKLAKVLSARLGQEVRLHASEDASLIGGVVIRAGDLVIDGSVRGKIAKLAEALKS.

The protein belongs to the ATPase delta chain family. In terms of assembly, F-type ATPases have 2 components, F(1) - the catalytic core - and F(0) - the membrane proton channel. F(1) has five subunits: alpha(3), beta(3), gamma(1), delta(1), epsilon(1). F(0) has three main subunits: a(1), b(2) and c(10-14). The alpha and beta chains form an alternating ring which encloses part of the gamma chain. F(1) is attached to F(0) by a central stalk formed by the gamma and epsilon chains, while a peripheral stalk is formed by the delta and b chains.

The protein resides in the cell inner membrane. Its function is as follows. F(1)F(0) ATP synthase produces ATP from ADP in the presence of a proton or sodium gradient. F-type ATPases consist of two structural domains, F(1) containing the extramembraneous catalytic core and F(0) containing the membrane proton channel, linked together by a central stalk and a peripheral stalk. During catalysis, ATP synthesis in the catalytic domain of F(1) is coupled via a rotary mechanism of the central stalk subunits to proton translocation. Functionally, this protein is part of the stalk that links CF(0) to CF(1). It either transmits conformational changes from CF(0) to CF(1) or is implicated in proton conduction. The polypeptide is ATP synthase subunit delta (Pseudomonas putida (strain ATCC 700007 / DSM 6899 / JCM 31910 / BCRC 17059 / LMG 24140 / F1)).